The chain runs to 433 residues: ATP-sensitive inward rectifier potassium channel 12 (433 aa).

At 1 to 77 the chain is on the cytoplasmic side; the sequence is MTAASRANPY…LADMFTTCVD (77 aa). At cysteine 75 the chain carries S-nitrosocysteine. Residues 78-104 traverse the membrane as a helical segment; the sequence is IRWRYMLLIFSLAFLASWLLFGIIFWV. A 1,2-diacyl-sn-glycero-3-phospho-(1D-myo-inositol-4,5-bisphosphate) contacts are provided by arginine 79 and arginine 81. Over 105–129 the chain is Extracellular; sequence IAVAHGDLEPAEGRGRTPCVMQVHG. Cysteine 123 and cysteine 155 are oxidised to a cystine. The helical; Pore-forming intramembrane region spans 130-146; the sequence is FMAAFLFSIETQTTIGY. 4 residues coordinate K(+): threonine 143, isoleucine 144, glycine 145, and tyrosine 146. A Selectivity filter motif is present at residues 143–148; sequence TIGYGL. The Extracellular portion of the chain corresponds to 147–155; the sequence is GLRCVTEEC. Residues 156-183 traverse the membrane as a helical segment; the sequence is PVAVFMVVAQSIVGCIIDSFMIGAIMAK. Residues lysine 183 and lysine 188 each contribute to the a 1,2-diacyl-sn-glycero-3-phospho-(1D-myo-inositol-4,5-bisphosphate) site. The Cytoplasmic portion of the chain corresponds to 184-433; that stretch reads MARPKKRAQT…QRPYRRESEI (250 aa). A disordered region spans residues 387–433; sequence DEEDEADGDQDGRSRDGLSPQARHDFDRLQAGGGVLEQRPYRRESEI. The span at 396-414 shows a compositional bias: basic and acidic residues; it reads QDGRSRDGLSPQARHDFDR. The PDZ-binding signature appears at 431 to 433; sequence SEI.

This sequence belongs to the inward rectifier-type potassium channel (TC 1.A.2.1) family. KCNJ12 subfamily. As to quaternary structure, homotetramer. Forms heteromer with KCNJ4. Can form heteromeric channels with Kir2.6/KCNJ18. Association, via its PDZ-recognition domain, with LIN7A, LIN7B, LIN7C, DLG1, CASK and APBA1 plays a key role in its localization and trafficking.

It is found in the membrane. It localises to the cell membrane. The protein resides in the sarcolemma. Its subcellular location is the T-tubule. The enzyme catalyses K(+)(in) = K(+)(out). Its activity is regulated as follows. Activated by phosphatidylinositol 4,5-biphosphate (PtdIns(4,5)P2). PtdIns(4,5)P2 binding to the cytoplasmic side of the channel triggers a conformation change leading to channel opening. Inhibited by Ba(2+). In terms of biological role, inward rectifying potassium channel that probably participates in controlling the resting membrane potential in electrically excitable cells. Probably participates in establishing action potential waveform and excitability of neuronal and muscle tissues. Inward rectifier potassium channels are characterized by a greater tendency to allow potassium to flow into the cell rather than out of it. Their voltage dependence is regulated by the concentration of extracellular potassium; as external potassium is raised, the voltage range of the channel opening shifts to more positive voltages. The inward rectification is mainly due to the blockage of outward current by internal magnesium. This is ATP-sensitive inward rectifier potassium channel 12 (KCNJ12) from Homo sapiens (Human).